The primary structure comprises 41 residues: Giant hemoglobin AI chain (41 aa).

Residues 2–41 (DCGMLQRIKVKQQWASVYSSGIAREDFGEAIWKAVFALAP) enclose the Globin domain.

This sequence belongs to the globin family. In terms of assembly, giant hemoglobin is composed of four heme-containing chains (AI to AIV), and two linker chains (AV and AVI).

The sequence is that of Giant hemoglobin AI chain from Lamellibrachia sp. (Deep-sea giant tube worm).